We begin with the raw amino-acid sequence, 121 residues long: Spermidine export protein MdtJ (121 aa).

Transmembrane regions (helical) follow at residues 1–21 (MYIY…GTLS), 32–52 (GGFI…SFAV), 55–75 (IALG…ITLF), and 82–102 (ESLS…IVLI).

It belongs to the drug/metabolite transporter (DMT) superfamily. Small multidrug resistance (SMR) (TC 2.A.7.1) family. MdtJ subfamily. In terms of assembly, forms a complex with MdtI.

The protein resides in the cell inner membrane. In terms of biological role, catalyzes the excretion of spermidine. The polypeptide is Spermidine export protein MdtJ (Escherichia coli O127:H6 (strain E2348/69 / EPEC)).